The following is a 300-amino-acid chain: MGRCLTKKVFLIQSPILFLHLLISLSSGAVKPDLKGVCVSKGGRFPPYELEGKPPKSVGRGSKDLTLCRVFRKKTCCSSVQTNPAFVAVRNLATYGEASQECLELFELLECSICNPNVGIQPGPPRICASFCDRVFEACKDAYFASNALKRVIGPCGVNDDIICIKASNWESNGTSFCEAAGFAVQRNDDSREKPCYGSKASLESVVESWSRDSRKETPLKTETLSCFKDLLQWVREMTTIQKISLGMSFLIAGMFLIRQSNNRNQKQRLAAIQRTARRLRGNGNGDSYSAAINRRTSSD.

A signal peptide spans 1 to 28; that stretch reads MGRCLTKKVFLIQSPILFLHLLISLSSG. Intrachain disulfides connect C38–C76, C68–C111, C77–C114, C102–C139, and C132–C178. N-linked (GlcNAc...) asparagine glycosylation is present at N173. The helical transmembrane segment at 238–258 threads the bilayer; sequence MTTIQKISLGMSFLIAGMFLI.

It belongs to the folate receptor family. Expressed in leaves.

It is found in the membrane. In terms of biological role, folic acid-binding protein involved in salicylic acid- (SA-) induced folate accumulation by triggering uptake and accumulation of folic acid in cells. May be implicated in the transport of the folates from the site of production (leaves) to the site of storage (fruits and seeds) and utilization (roots). This chain is Folate-binding protein 1, found in Arabidopsis thaliana (Mouse-ear cress).